A 188-amino-acid polypeptide reads, in one-letter code: Ribosome-recycling factor (188 aa).

Belongs to the RRF family.

Its subcellular location is the cytoplasm. Functionally, responsible for the release of ribosomes from messenger RNA at the termination of protein biosynthesis. May increase the efficiency of translation by recycling ribosomes from one round of translation to another. The sequence is that of Ribosome-recycling factor from Anaeromyxobacter dehalogenans (strain 2CP-1 / ATCC BAA-258).